Consider the following 72-residue polypeptide: Subtilisin-chymotrypsin inhibitor-2B (72 aa).

Belongs to the protease inhibitor I13 (potato type I serine protease inhibitor) family.

Its function is as follows. Inhibits both subtilisin and chymotrypsin. This chain is Subtilisin-chymotrypsin inhibitor-2B, found in Hordeum vulgare (Barley).